Here is a 59-residue protein sequence, read N- to C-terminus: UPF0181 protein YoaH (59 aa).

This sequence belongs to the UPF0181 family.

The sequence is that of UPF0181 protein YoaH from Shigella flexneri.